We begin with the raw amino-acid sequence, 198 residues long: MTINLILLSLLAYVIGSIPSGLWIGKFFYKKDIREFGSGNLGATNSFRVLGIKAGSIVTVMDILKGTVATLLPFFFQLHVDHHFWLLTGAFAIIGHSFPLFAGFRGGKAVATSAGVILAYAPLLFVAALIIFLLTLKISKYVSLSSMIAALAALLISLFMGDWILIILIACITLFVVWRHRANITRIRNGEEPKIKWM.

A run of 5 helical transmembrane segments spans residues 5-25 (LILL…LWIG), 56-76 (SIVT…PFFF), 84-104 (FWLL…FAGF), 114-134 (AGVI…IFLL), and 158-178 (LFMG…FVVW).

This sequence belongs to the PlsY family. In terms of assembly, probably interacts with PlsX.

The protein localises to the cell membrane. The catalysed reaction is an acyl phosphate + sn-glycerol 3-phosphate = a 1-acyl-sn-glycero-3-phosphate + phosphate. The protein operates within lipid metabolism; phospholipid metabolism. Catalyzes the transfer of an acyl group from acyl-phosphate (acyl-PO(4)) to glycerol-3-phosphate (G3P) to form lysophosphatidic acid (LPA). This enzyme utilizes acyl-phosphate as fatty acyl donor, but not acyl-CoA or acyl-ACP. This is Glycerol-3-phosphate acyltransferase from Listeria welshimeri serovar 6b (strain ATCC 35897 / DSM 20650 / CCUG 15529 / CIP 8149 / NCTC 11857 / SLCC 5334 / V8).